The primary structure comprises 407 residues: Serine hydroxymethyltransferase (407 aa).

Residues L120 and G124–L126 contribute to the (6S)-5,6,7,8-tetrahydrofolate site. An N6-(pyridoxal phosphate)lysine modification is found at K229.

This sequence belongs to the SHMT family. Homodimer. It depends on pyridoxal 5'-phosphate as a cofactor.

It is found in the cytoplasm. It carries out the reaction (6R)-5,10-methylene-5,6,7,8-tetrahydrofolate + glycine + H2O = (6S)-5,6,7,8-tetrahydrofolate + L-serine. It functions in the pathway one-carbon metabolism; tetrahydrofolate interconversion. It participates in amino-acid biosynthesis; glycine biosynthesis; glycine from L-serine: step 1/1. Catalyzes the reversible interconversion of serine and glycine with tetrahydrofolate (THF) serving as the one-carbon carrier. This reaction serves as the major source of one-carbon groups required for the biosynthesis of purines, thymidylate, methionine, and other important biomolecules. Also exhibits THF-independent aldolase activity toward beta-hydroxyamino acids, producing glycine and aldehydes, via a retro-aldol mechanism. The sequence is that of Serine hydroxymethyltransferase from Deinococcus deserti (strain DSM 17065 / CIP 109153 / LMG 22923 / VCD115).